The primary structure comprises 109 residues: Putative ankyrin repeat protein L482 (109 aa).

4 ANK repeats span residues 1–26 (YLTEISGKGHIEIVKCLVNLGANITT), 27–56 (NNNYAIIQASEKGHLEVVKYLVGQNANIRS), 57–86 (ENNLAVRLASGNGHLEVVEYLVNLGADIRS), and 88–109 (NNYAIQSASQNGHLEVIEYLVA).

The polypeptide is Putative ankyrin repeat protein L482 (Acanthamoeba polyphaga (Amoeba)).